The primary structure comprises 135 residues: DNA-binding protein inhibitor ID-2-B (135 aa).

One can recognise a bHLH domain in the interval 23-75 (ARSKAPVDEPMSLLYNMNDCYSKLKELVPSIPPNKKVSKMEILQHVIDYILDL). Residues 108–117 (LNTDISILSL) carry the Nuclear export signal motif.

As to quaternary structure, heterodimer with other HLH proteins.

It localises to the cytoplasm. The protein resides in the nucleus. Transcriptional regulator (lacking a basic DNA binding domain) which negatively regulates the basic helix-loop-helix (bHLH) transcription factors by forming heterodimers and inhibiting their DNA binding and transcriptional activity. Inhibits the activity of both neurogenic (neurod1/neuroD) and myogenic (myod1/myoD) bHLH factors. May play a role in the regulation of the circadian clock. The polypeptide is DNA-binding protein inhibitor ID-2-B (id2-b) (Xenopus laevis (African clawed frog)).